The chain runs to 37 residues: Large ribosomal subunit protein bL36c (37 aa).

It belongs to the bacterial ribosomal protein bL36 family.

It localises to the plastid. The protein resides in the chloroplast. This is Large ribosomal subunit protein bL36c from Pelargonium hortorum (Common geranium).